A 168-amino-acid polypeptide reads, in one-letter code: Ubiquitin-conjugating enzyme E2 2 (168 aa).

The UBC core domain maps to proline 4 to asparagine 150. The active-site Glycyl thioester intermediate is the cysteine 88. Residues glutamate 143 to glutamate 168 form a disordered region. Positions tryptophan 149 to glutamate 168 are enriched in acidic residues.

It belongs to the ubiquitin-conjugating enzyme family.

The protein resides in the cytoplasm. It localises to the nucleus. It catalyses the reaction S-ubiquitinyl-[E1 ubiquitin-activating enzyme]-L-cysteine + [E2 ubiquitin-conjugating enzyme]-L-cysteine = [E1 ubiquitin-activating enzyme]-L-cysteine + S-ubiquitinyl-[E2 ubiquitin-conjugating enzyme]-L-cysteine.. It participates in protein modification; protein ubiquitination. Its function is as follows. Catalyzes the covalent attachment of ubiquitin to other proteins. Plays a role in transcription regulation by catalyzing the monoubiquitination of histone H2B to form H2BK123ub1. H2BK123ub1 gives a specific tag for epigenetic transcriptional activation and is also a prerequisite for H3K4me and H3K79me formation. Also involved in postreplication repair of UV-damaged DNA, in N-end rule-dependent protein degradation and in sporulation. This chain is Ubiquitin-conjugating enzyme E2 2 (UBC2), found in Debaryomyces hansenii (strain ATCC 36239 / CBS 767 / BCRC 21394 / JCM 1990 / NBRC 0083 / IGC 2968) (Yeast).